Reading from the N-terminus, the 247-residue chain is MNPLLILAFVGAAVAVPFDDDDKIVGGYTCEENSVPYQVSLNSGSHFCGGSLISEQWVVSAGHCYKPHIQVRLGEHNIEVLEGNEQFINAAKIIRHPKYNRIILNNDIMLIKLSTPAVINAHVSTISLPTAPPAAGTECLISGWGNTLSSGADYPDELQCLDAPVLTQAKCKASYPLKITSNMFCVGFLEGGKDSCQGDSGGPVVCNGQLQGIVSWGYGCAQKRRPGVYTKVYNYVDWIKDTIAANS.

An N-terminal signal peptide occupies residues Met1–Ala15. The region spanning Ile24 to Ala244 is the Peptidase S1 domain. The cysteines at positions 48 and 64 are disulfide-linked. Residue His63 is the Charge relay system of the active site. Positions 75, 77, 80, and 85 each coordinate Ca(2+). The active-site Charge relay system is Asp107. Intrachain disulfides connect Cys139/Cys206, Cys171/Cys185, and Cys196/Cys220. Catalysis depends on Ser200, which acts as the Charge relay system.

This sequence belongs to the peptidase S1 family. Tryptase subfamily. In terms of tissue distribution, overexpressed in metastasing in non small cell lung tumors, leading to an enhanced cell migration.

It localises to the secreted. It carries out the reaction Preferential cleavage: Arg-|-Xaa, Lys-|-Xaa.. May regulate cell migration. This chain is Putative trypsin-6 (PRSS3P2), found in Homo sapiens (Human).